The following is a 324-amino-acid chain: Muscleblind-like protein (324 aa).

2 consecutive C3H1-type zinc fingers follow at residues 38-66 (WLQVEVCREFLRGQCARSDQECKFAHPPP) and 72-100 (QGRVTACYDSIKGRCTRENPKCKYLHPPQ).

This sequence belongs to the muscleblind family. Expressed in neurons around the pharynx.

The protein localises to the nucleus. Functionally, binds to RNA with repeat sequences 5'-CUG-3' and 5'-CCUG-3'. The polypeptide is Muscleblind-like protein (mbl-1) (Caenorhabditis elegans).